The following is a 267-amino-acid chain: Glutamate 5-kinase (267 aa).

Lys-14 provides a ligand contact to ATP. Ser-54, Asp-141, and Asn-157 together coordinate substrate. ATP is bound by residues 177 to 178 (SD) and 219 to 225 (TGGMMSK).

Belongs to the glutamate 5-kinase family.

It localises to the cytoplasm. It carries out the reaction L-glutamate + ATP = L-glutamyl 5-phosphate + ADP. Its pathway is amino-acid biosynthesis; L-proline biosynthesis; L-glutamate 5-semialdehyde from L-glutamate: step 1/2. Its function is as follows. Catalyzes the transfer of a phosphate group to glutamate to form L-glutamate 5-phosphate. In Streptococcus thermophilus, this protein is Glutamate 5-kinase.